Consider the following 273-residue polypeptide: Dermonecrotic toxin LhSicTox-alphaIA1ii (273 aa).

His5 is a catalytic residue. Residues Glu25 and Asp27 each coordinate Mg(2+). The Nucleophile role is filled by His41. Cystine bridges form between Cys45–Cys51 and Cys47–Cys190. Asp85 is a binding site for Mg(2+).

Belongs to the arthropod phospholipase D family. Class II subfamily. Requires Mg(2+) as cofactor. Expressed by the venom gland.

Its subcellular location is the secreted. It carries out the reaction an N-(acyl)-sphingosylphosphocholine = an N-(acyl)-sphingosyl-1,3-cyclic phosphate + choline. It catalyses the reaction an N-(acyl)-sphingosylphosphoethanolamine = an N-(acyl)-sphingosyl-1,3-cyclic phosphate + ethanolamine. The enzyme catalyses a 1-acyl-sn-glycero-3-phosphocholine = a 1-acyl-sn-glycero-2,3-cyclic phosphate + choline. The catalysed reaction is a 1-acyl-sn-glycero-3-phosphoethanolamine = a 1-acyl-sn-glycero-2,3-cyclic phosphate + ethanolamine. In terms of biological role, dermonecrotic toxins cleave the phosphodiester linkage between the phosphate and headgroup of certain phospholipids (sphingolipid and lysolipid substrates), forming an alcohol (often choline) and a cyclic phosphate. This toxin acts on sphingomyelin (SM). It may also act on ceramide phosphoethanolamine (CPE), lysophosphatidylcholine (LPC) and lysophosphatidylethanolamine (LPE), but not on lysophosphatidylserine (LPS), and lysophosphatidylglycerol (LPG). It acts by transphosphatidylation, releasing exclusively cyclic phosphate products as second products. Induces dermonecrosis, hemolysis, increased vascular permeability, edema, inflammatory response, and platelet aggregation. This is Dermonecrotic toxin LhSicTox-alphaIA1ii from Loxosceles hirsuta (Recluse spider).